Reading from the N-terminus, the 264-residue chain is Putative ankyrin repeat domain-containing protein 19 (264 aa).

5 ANK repeats span residues 67–96 (KDRT…QINI), 100–129 (LNRT…NPNI), 133–162 (YSNT…NIEA), 166–195 (EGNT…NLHA), and 199–228 (FRRT…NIFS).

The polypeptide is Putative ankyrin repeat domain-containing protein 19 (ANKRD19P) (Homo sapiens (Human)).